The following is a 462-amino-acid chain: Cytokine-like nuclear factor N-PAC (462 aa).

In terms of domain architecture, PWWP spans 8–66 (IGDLVWGKLGRYPPWPGKVVSPPKDLKKPRGKKCFFVKFFGTEDHAWIKVEQLKPYHPH). Residues 91 to 111 (KKAKGKDQSHSDDKSKSDKGR) show a composition bias toward basic and acidic residues. The disordered stretch occupies residues 91 to 139 (KKAKGKDQSHSDDKSKSDKGRKAAKPMKIIEEDDEDAFKGGSSDKPASS). The segment at 169 to 462 (GSITPTDKRI…MSAVYRAYIH (294 aa)) is dehydrogenase domain. NAD(+) contacts are provided by residues 179–193 (GFLG…VVSN), T270, and K414.

This sequence belongs to the HIBADH-related family. NP60 subfamily. In terms of assembly, homotetramere. Binds to mononucleosomes.

It localises to the nucleus. It is found in the chromosome. Its function is as follows. May have oxidoreductase activity. Regulates p38 MAP kinase activity by mediating stress activation of mapk14 and specifically regulating mapk14 signaling. Functionally, cytokine-like nuclear factor with chromatin gene reader activity involved in chromatin modification and regulation of gene expression. Acts as a nucleosome-destabilizing factor that is recruited to genes during transcriptional activation. Recognizes and binds histone H3 without a preference for specific epigenetic markers and also binds DNA. Interacts with KDM1B and promotes its histone demethylase activity by facilitating the capture of H3 tails, they form a multifunctional enzyme complex that modifies transcribed chromatin and facilitates Pol II transcription through nucleosomes. This Danio rerio (Zebrafish) protein is Cytokine-like nuclear factor N-PAC (glyr1).